The primary structure comprises 407 residues: Fructose-1,6-bisphosphatase, chloroplastic (407 aa).

Residues 1–50 constitute a chloroplast transit peptide; it reads MAAATASSQLIFSKPYSPSRLCPFQLCVFDAKSVLSSSRRKHVNGSGVRC. Positions 126, 155, 176, 178, and 179 each coordinate Mg(2+). 179–182 contacts substrate; sequence DGSS. Cys203 and Cys223 are oxidised to a cystine. Substrate contacts are provided by Asn287, Tyr319, Tyr337, Tyr339, and Lys349. Glu355 lines the Mg(2+) pocket.

This sequence belongs to the FBPase class 1 family. Homotetramer. It depends on Mg(2+) as a cofactor.

The protein resides in the plastid. It is found in the chloroplast stroma. It catalyses the reaction beta-D-fructose 1,6-bisphosphate + H2O = beta-D-fructose 6-phosphate + phosphate. It participates in carbohydrate biosynthesis; Calvin cycle. The polypeptide is Fructose-1,6-bisphosphatase, chloroplastic (FBP) (Pisum sativum (Garden pea)).